The sequence spans 462 residues: tRNA modification GTPase MnmE (462 aa).

Arg-27, Glu-89, and Arg-128 together coordinate (6S)-5-formyl-5,6,7,8-tetrahydrofolate. Positions 224 to 383 (GLATAIVGRP…LDERIAKLFF (160 aa)) constitute a TrmE-type G domain. Asn-234 is a binding site for K(+). GTP-binding positions include 234 to 239 (NVGKSS), 253 to 259 (TDVAGTT), and 278 to 281 (DTAG). Ser-238 provides a ligand contact to Mg(2+). K(+)-binding residues include Thr-253, Val-255, and Thr-258. Residue Thr-259 coordinates Mg(2+). Lys-462 contacts (6S)-5-formyl-5,6,7,8-tetrahydrofolate.

Belongs to the TRAFAC class TrmE-Era-EngA-EngB-Septin-like GTPase superfamily. TrmE GTPase family. In terms of assembly, homodimer. Heterotetramer of two MnmE and two MnmG subunits. K(+) serves as cofactor.

It localises to the cytoplasm. Functionally, exhibits a very high intrinsic GTPase hydrolysis rate. Involved in the addition of a carboxymethylaminomethyl (cmnm) group at the wobble position (U34) of certain tRNAs, forming tRNA-cmnm(5)s(2)U34. The protein is tRNA modification GTPase MnmE of Lacticaseibacillus paracasei (strain ATCC 334 / BCRC 17002 / CCUG 31169 / CIP 107868 / KCTC 3260 / NRRL B-441) (Lactobacillus paracasei).